A 206-amino-acid chain; its full sequence is Ras-related protein Rab7 (206 aa).

Residues 15-22, 63-67, and 125-128 contribute to the GTP site; these read GDSGVGKT, DTAGQ, and NKID. 2 S-geranylgeranyl cysteine lipidation sites follow: cysteine 204 and cysteine 206. Cysteine 206 is modified (cysteine methyl ester).

Belongs to the small GTPase superfamily. Rab family.

It localises to the cell membrane. Functionally, protein transport. Probably involved in vesicular traffic. The polypeptide is Ras-related protein Rab7 (Pisum sativum (Garden pea)).